A 485-amino-acid polypeptide reads, in one-letter code: Glutamate--tRNA ligase 1 (485 aa).

The 'HIGH' region motif lies at 9–19; sequence PSPTGHLHIGG. Positions 250 to 254 match the 'KMSKS' region motif; the sequence is KMSKR. An ATP-binding site is contributed by Lys253.

Belongs to the class-I aminoacyl-tRNA synthetase family. Glutamate--tRNA ligase type 1 subfamily. In terms of assembly, monomer.

It localises to the cytoplasm. It catalyses the reaction tRNA(Glu) + L-glutamate + ATP = L-glutamyl-tRNA(Glu) + AMP + diphosphate. Functionally, catalyzes the attachment of glutamate to tRNA(Glu) in a two-step reaction: glutamate is first activated by ATP to form Glu-AMP and then transferred to the acceptor end of tRNA(Glu). The protein is Glutamate--tRNA ligase 1 of Caldicellulosiruptor saccharolyticus (strain ATCC 43494 / DSM 8903 / Tp8T 6331).